The chain runs to 286 residues: Tyrosine recombinase XerA (286 aa).

The Core-binding (CB) domain occupies 5–82 (TLRSEVLEEF…ALKAYFKFEG (78 aa)). A Tyr recombinase domain is found at 98-274 (TLPKSLTEEE…TAKHLKEAVE (177 aa)). Catalysis depends on residues R135, K160, H226, R229, and H252. Y261 functions as the O-(3'-phospho-DNA)-tyrosine intermediate in the catalytic mechanism.

This sequence belongs to the 'phage' integrase family. XerA subfamily.

The protein localises to the cytoplasm. Its function is as follows. Site-specific tyrosine recombinase, which acts by catalyzing the cutting and rejoining of the recombining DNA molecules. This chain is Tyrosine recombinase XerA, found in Pyrococcus furiosus (strain ATCC 43587 / DSM 3638 / JCM 8422 / Vc1).